Here is a 177-residue protein sequence, read N- to C-terminus: MSRIGKKPVPVPAGVTASVEGQTVKAKGAKGELSFVVHDEVLVKMEDGAVRVDPRDQSKEARSKWGMSRTMISNIFVGVKDGFEKKLEISGVGYRAAMQGKNLQLSLGFSHEVVYDVPAGITVAVPKPTEIVVTGIDKQQVGQVAAEIREYRGPEPYKGKGVKYAGEKIVRKEGKKK.

Belongs to the universal ribosomal protein uL6 family. Part of the 50S ribosomal subunit.

This protein binds to the 23S rRNA, and is important in its secondary structure. It is located near the subunit interface in the base of the L7/L12 stalk, and near the tRNA binding site of the peptidyltransferase center. The chain is Large ribosomal subunit protein uL6 from Brucella canis (strain ATCC 23365 / NCTC 10854 / RM-666).